A 469-amino-acid chain; its full sequence is UDP-N-acetylmuramate--L-alanine ligase (469 aa).

Position 119–125 (119–125 (GTHGKTT)) interacts with ATP.

Belongs to the MurCDEF family.

The protein localises to the cytoplasm. The enzyme catalyses UDP-N-acetyl-alpha-D-muramate + L-alanine + ATP = UDP-N-acetyl-alpha-D-muramoyl-L-alanine + ADP + phosphate + H(+). It participates in cell wall biogenesis; peptidoglycan biosynthesis. Its function is as follows. Cell wall formation. In Ruthia magnifica subsp. Calyptogena magnifica, this protein is UDP-N-acetylmuramate--L-alanine ligase.